We begin with the raw amino-acid sequence, 688 residues long: Sodium channel and clathrin linker 1 (688 aa).

Ala2 bears the N-acetylalanine mark. Residues 69 to 673 are a coiled coil; that stretch reads ELNGQLKYYQ…SASQQLSVIT (605 aa). Ser681 bears the Phosphoserine mark.

Interacts with SCN10A and clathrin. Identified in a complex containing SCN10A, clathrin and SCLT1.

It is found in the cytoplasm. The protein localises to the cytoskeleton. Its subcellular location is the microtubule organizing center. It localises to the centrosome. The protein resides in the centriole. Functionally, adapter protein that links SCN10A to clathrin. Regulates SCN10A channel activity, possibly by promoting channel internalization. The chain is Sodium channel and clathrin linker 1 (SCLT1) from Homo sapiens (Human).